We begin with the raw amino-acid sequence, 241 residues long: Demethylmenaquinone methyltransferase (241 aa).

S-adenosyl-L-methionine-binding positions include T68, D88, and 114-115 (DA).

This sequence belongs to the class I-like SAM-binding methyltransferase superfamily. MenG/UbiE family.

It catalyses the reaction a 2-demethylmenaquinol + S-adenosyl-L-methionine = a menaquinol + S-adenosyl-L-homocysteine + H(+). Its pathway is quinol/quinone metabolism; menaquinone biosynthesis; menaquinol from 1,4-dihydroxy-2-naphthoate: step 2/2. Its function is as follows. Methyltransferase required for the conversion of demethylmenaquinol (DMKH2) to menaquinol (MKH2). The polypeptide is Demethylmenaquinone methyltransferase (Deinococcus radiodurans (strain ATCC 13939 / DSM 20539 / JCM 16871 / CCUG 27074 / LMG 4051 / NBRC 15346 / NCIMB 9279 / VKM B-1422 / R1)).